The chain runs to 525 residues: Light-independent protochlorophyllide reductase subunit B (525 aa).

Aspartate 36 lines the [4Fe-4S] cluster pocket. Aspartate 290 functions as the Proton donor in the catalytic mechanism. A substrate-binding site is contributed by 425 to 426 (GL).

It belongs to the ChlB/BchB/BchZ family. In terms of assembly, protochlorophyllide reductase is composed of three subunits; ChlL, ChlN and ChlB. Forms a heterotetramer of two ChlB and two ChlN subunits. [4Fe-4S] cluster is required as a cofactor.

The enzyme catalyses chlorophyllide a + oxidized 2[4Fe-4S]-[ferredoxin] + 2 ADP + 2 phosphate = protochlorophyllide a + reduced 2[4Fe-4S]-[ferredoxin] + 2 ATP + 2 H2O. It participates in porphyrin-containing compound metabolism; chlorophyll biosynthesis (light-independent). Its function is as follows. Component of the dark-operative protochlorophyllide reductase (DPOR) that uses Mg-ATP and reduced ferredoxin to reduce ring D of protochlorophyllide (Pchlide) to form chlorophyllide a (Chlide). This reaction is light-independent. The NB-protein (ChlN-ChlB) is the catalytic component of the complex. The protein is Light-independent protochlorophyllide reductase subunit B of Prochlorococcus marinus (strain MIT 9312).